The chain runs to 555 residues: Adenine deaminase (555 aa).

Belongs to the metallo-dependent hydrolases superfamily. Adenine deaminase family. It depends on Mn(2+) as a cofactor.

It catalyses the reaction adenine + H2O + H(+) = hypoxanthine + NH4(+). The protein is Adenine deaminase of Methanosarcina mazei (strain ATCC BAA-159 / DSM 3647 / Goe1 / Go1 / JCM 11833 / OCM 88) (Methanosarcina frisia).